Here is a 458-residue protein sequence, read N- to C-terminus: MSAGKIVQIIGAVIDVEFPQNAVPKVYDALKVEEGGLTLEVQQQLGGGVVRCIALGTSDGLKRGLAVKNTGNPISVPVGTKTLGRIMNVLGEPIDQKGEIGAEETWAIHREAPSYEDQSNSTELLETGIKVIDLICPFAKGGKVGLFGGAGVGKTVNMMELIRNIAIEHSGFSVFAGVGERTREGNDFYHEMTESNVLDKVSLVYGQMNEPPGNRLRVALTGLTMAEKFRDEGRDVLFFVDNIYRYTLAGTEVSALLGRMPSAVGYQPTLAEEMGVLQERITSTKTGSITSVQAVYVPADDLTDPSPATTFAHLDSTVVLSRNIASLGIYPAVDPLDSTSRQLDPQVVGQEHYDVARGVQGILQRYKELKDIIAILSMDELSEDDKLVVARARKIERFLSQPFFVAEVFTGSPGKYVSLKDTIRGFKGILEGEYDHIPEQAFYMVGSIEEVVEKAKNM.

148–155 serves as a coordination point for ATP; sequence GGAGVGKT.

It belongs to the ATPase alpha/beta chains family. F-type ATPases have 2 components, CF(1) - the catalytic core - and CF(0) - the membrane proton channel. CF(1) has five subunits: alpha(3), beta(3), gamma(1), delta(1), epsilon(1). CF(0) has three main subunits: a(1), b(2) and c(9-12). The alpha and beta chains form an alternating ring which encloses part of the gamma chain. CF(1) is attached to CF(0) by a central stalk formed by the gamma and epsilon chains, while a peripheral stalk is formed by the delta and b chains.

The protein resides in the cell inner membrane. It catalyses the reaction ATP + H2O + 4 H(+)(in) = ADP + phosphate + 5 H(+)(out). In terms of biological role, produces ATP from ADP in the presence of a proton gradient across the membrane. The catalytic sites are hosted primarily by the beta subunits. This chain is ATP synthase subunit beta, found in Actinobacillus succinogenes (strain ATCC 55618 / DSM 22257 / CCUG 43843 / 130Z).